Consider the following 385-residue polypeptide: Putative transport protein MT1133 (385 aa).

A run of 8 helical transmembrane segments spans residues 7 to 27, 32 to 52, 66 to 86, 159 to 179, 218 to 238, 241 to 261, 263 to 283, and 319 to 339; these read LTQKRALAILTLIALLFGAYF, FVLIVVAAVGAYLFTPLFKWF, LLSALAAVVVPVGALVGLAIV, SLAGVITSAIIFVYVFVALLV, FVIAACQGVAGAASIYIAGFH, FFIFAIVLTALSIIPLGGGIV, IPFGIGMIFYGNIAGGIFVLL, and GITMFGPWGIIIGPVLMILIV.

This sequence belongs to the autoinducer-2 exporter (AI-2E) (TC 2.A.86) family.

The protein resides in the cell membrane. The polypeptide is Putative transport protein MT1133 (Mycobacterium tuberculosis (strain CDC 1551 / Oshkosh)).